Here is a 466-residue protein sequence, read N- to C-terminus: Probable multidrug resistance protein NorM (466 aa).

11 helical membrane passes run 68–90 (AHTV…SPLV), 110–132 (LWVA…HILI), 142–164 (ALAQ…FIAL), 177–199 (PLWI…IHGL), 209–231 (GAGL…IAAW), 251–273 (LVRQ…YGLF), 288–310 (LAAH…GIGM), 331–353 (AGLV…IILG), 368–387 (SAAT…TFFI), 407–429 (MTLA…VLAF), and 433–455 (LGAV…LLVL).

The protein belongs to the multi antimicrobial extrusion (MATE) (TC 2.A.66.1) family.

It is found in the cell inner membrane. Multidrug efflux pump. This Bradyrhizobium diazoefficiens (strain JCM 10833 / BCRC 13528 / IAM 13628 / NBRC 14792 / USDA 110) protein is Probable multidrug resistance protein NorM (norM).